Reading from the N-terminus, the 490-residue chain is Bifunctional protein HldE (490 aa).

The segment at 1-330 (MERKNVESLF…GSLGFQHGEG (330 aa)) is ribokinase. 205–208 (NRKE) contributes to the ATP binding site. Residue aspartate 275 is part of the active site. Residues 356-490 (FTNGCFDLLH…EKILKAYGEE (135 aa)) are cytidylyltransferase.

In the N-terminal section; belongs to the carbohydrate kinase PfkB family. This sequence in the C-terminal section; belongs to the cytidylyltransferase family. Homodimer.

The catalysed reaction is D-glycero-beta-D-manno-heptose 7-phosphate + ATP = D-glycero-beta-D-manno-heptose 1,7-bisphosphate + ADP + H(+). It catalyses the reaction D-glycero-beta-D-manno-heptose 1-phosphate + ATP + H(+) = ADP-D-glycero-beta-D-manno-heptose + diphosphate. It functions in the pathway nucleotide-sugar biosynthesis; ADP-L-glycero-beta-D-manno-heptose biosynthesis; ADP-L-glycero-beta-D-manno-heptose from D-glycero-beta-D-manno-heptose 7-phosphate: step 1/4. Its pathway is nucleotide-sugar biosynthesis; ADP-L-glycero-beta-D-manno-heptose biosynthesis; ADP-L-glycero-beta-D-manno-heptose from D-glycero-beta-D-manno-heptose 7-phosphate: step 3/4. Catalyzes the phosphorylation of D-glycero-D-manno-heptose 7-phosphate at the C-1 position to selectively form D-glycero-beta-D-manno-heptose-1,7-bisphosphate. In terms of biological role, catalyzes the ADP transfer from ATP to D-glycero-beta-D-manno-heptose 1-phosphate, yielding ADP-D-glycero-beta-D-manno-heptose. This is Bifunctional protein HldE from Geobacter sulfurreducens (strain ATCC 51573 / DSM 12127 / PCA).